The following is a 283-amino-acid chain: Pantothenate synthetase (283 aa).

30 to 37 (MGNLHAGH) contacts ATP. The active-site Proton donor is histidine 37. Glutamine 61 contributes to the (R)-pantoate binding site. Residue glutamine 61 participates in beta-alanine binding. Position 149 to 152 (149 to 152 (GRKD)) interacts with ATP. Residue glutamine 155 coordinates (R)-pantoate. 186-189 (LSSR) serves as a coordination point for ATP.

It belongs to the pantothenate synthetase family. As to quaternary structure, homodimer.

The protein localises to the cytoplasm. It catalyses the reaction (R)-pantoate + beta-alanine + ATP = (R)-pantothenate + AMP + diphosphate + H(+). It functions in the pathway cofactor biosynthesis; (R)-pantothenate biosynthesis; (R)-pantothenate from (R)-pantoate and beta-alanine: step 1/1. In terms of biological role, catalyzes the condensation of pantoate with beta-alanine in an ATP-dependent reaction via a pantoyl-adenylate intermediate. The polypeptide is Pantothenate synthetase (Chromohalobacter salexigens (strain ATCC BAA-138 / DSM 3043 / CIP 106854 / NCIMB 13768 / 1H11)).